Reading from the N-terminus, the 60-residue chain is Large ribosomal subunit protein bL32 (60 aa).

The segment covering Met1–His23 has biased composition (basic residues). Residues Met1 to Val26 form a disordered region.

This sequence belongs to the bacterial ribosomal protein bL32 family.

The sequence is that of Large ribosomal subunit protein bL32 from Deinococcus geothermalis (strain DSM 11300 / CIP 105573 / AG-3a).